The following is a 147-amino-acid chain: Basic phospholipase A2 beta-bungarotoxin A4 chain (147 aa).

The signal sequence occupies residues 1–19 (MNPAHLLVLSAVCVSLLGA). The propeptide occupies 20–27 (ANIPPHPL). 6 disulfides stabilise this stretch: cysteine 54/cysteine 146, cysteine 56/cysteine 72, cysteine 71/cysteine 127, cysteine 78/cysteine 120, cysteine 88/cysteine 113, and cysteine 106/cysteine 118. Residues tyrosine 55, glycine 57, and glycine 59 each coordinate Ca(2+). Residue histidine 75 is part of the active site. Aspartate 76 serves as a coordination point for Ca(2+). The active site involves aspartate 121.

The protein belongs to the phospholipase A2 family. Group I subfamily. D49 sub-subfamily. In terms of assembly, heterodimer; disulfide-linked. The A chain has phospholipase A2 activity and the B chain shows homology with the basic protease inhibitors. Ca(2+) is required as a cofactor. Expressed by the venom gland.

The protein localises to the secreted. It catalyses the reaction a 1,2-diacyl-sn-glycero-3-phosphocholine + H2O = a 1-acyl-sn-glycero-3-phosphocholine + a fatty acid + H(+). Functionally, snake venom phospholipase A2 (PLA2) that shows presynaptic neurotoxicity. The A chain has phospholipase activity. PLA2 catalyzes the calcium-dependent hydrolysis of the 2-acyl groups in 3-sn-phosphoglycerides. In Bungarus candidus (Malayan krait), this protein is Basic phospholipase A2 beta-bungarotoxin A4 chain.